The following is an 85-amino-acid chain: Large ribosomal subunit protein bL31B (85 aa).

Belongs to the bacterial ribosomal protein bL31 family. Type B subfamily. Part of the 50S ribosomal subunit.

The protein is Large ribosomal subunit protein bL31B of Vibrio cholerae serotype O1 (strain ATCC 39541 / Classical Ogawa 395 / O395).